The primary structure comprises 628 residues: Chaperone protein HtpG (628 aa).

The interval 1–334 (MTTIDTASET…SEDLPLNLSR (334 aa)) is a; substrate-binding. The tract at residues 335-550 (EMLQNNPQLA…GFGPDRELEK (216 aa)) is b. Residues 551–628 (MLARANKGAA…LVLRGVVAHG (78 aa)) are c.

Belongs to the heat shock protein 90 family. As to quaternary structure, homodimer.

The protein localises to the cytoplasm. Functionally, molecular chaperone. Has ATPase activity. In Rhodopseudomonas palustris (strain HaA2), this protein is Chaperone protein HtpG.